The sequence spans 173 residues: RNA pyrophosphohydrolase (173 aa).

Residues 11–164 (PYRRSVGILV…KKHVYMKIVN (154 aa)) form the Nudix hydrolase domain. Positions 52–73 (GGIDENEEPLDAARRELYEETG) match the Nudix box motif.

The protein belongs to the Nudix hydrolase family. RppH subfamily. Requires a divalent metal cation as cofactor.

In terms of biological role, accelerates the degradation of transcripts by removing pyrophosphate from the 5'-end of triphosphorylated RNA, leading to a more labile monophosphorylated state that can stimulate subsequent ribonuclease cleavage. In Bartonella henselae (strain ATCC 49882 / DSM 28221 / CCUG 30454 / Houston 1) (Rochalimaea henselae), this protein is RNA pyrophosphohydrolase.